The sequence spans 626 residues: Glutamate--cysteine ligase (626 aa).

This sequence belongs to the glutamate--cysteine ligase type 3 family. In terms of assembly, monomer.

The catalysed reaction is L-cysteine + L-glutamate + ATP = gamma-L-glutamyl-L-cysteine + ADP + phosphate + H(+). The protein operates within sulfur metabolism; glutathione biosynthesis; glutathione from L-cysteine and L-glutamate: step 1/2. An essential enzyme in glutathione (L-gamma-glutamyl-L-cysteinylglycine, GSH) biosynthesis, GSH is essential for growth and differentiation to prespore stage. Catalyzes the condensation of glutamate to cysteine. The protein is Glutamate--cysteine ligase (gcsA) of Dictyostelium discoideum (Social amoeba).